Reading from the N-terminus, the 362-residue chain is tRNA-specific 2-thiouridylase MnmA (362 aa).

Residues 13 to 20 and methionine 39 each bind ATP; that span reads GLSGGVDS. An interaction with target base in tRNA region spans residues 99–101; sequence NPD. Cysteine 104 functions as the Nucleophile in the catalytic mechanism. Cysteine 104 and cysteine 200 are joined by a disulfide. Glycine 128 serves as a coordination point for ATP. Positions 150–152 are interaction with tRNA; that stretch reads KDQ. Cysteine 200 serves as the catalytic Cysteine persulfide intermediate.

Belongs to the MnmA/TRMU family.

The protein localises to the cytoplasm. It catalyses the reaction S-sulfanyl-L-cysteinyl-[protein] + uridine(34) in tRNA + AH2 + ATP = 2-thiouridine(34) in tRNA + L-cysteinyl-[protein] + A + AMP + diphosphate + H(+). Functionally, catalyzes the 2-thiolation of uridine at the wobble position (U34) of tRNA, leading to the formation of s(2)U34. The protein is tRNA-specific 2-thiouridylase MnmA of Coxiella burnetii (strain Dugway 5J108-111).